The primary structure comprises 360 residues: Phospho-N-acetylmuramoyl-pentapeptide-transferase (360 aa).

The Periplasmic portion of the chain corresponds to 1–25 (MLVWLAEHLVKYYSGFNVFSYLTFR). A helical membrane pass occupies residues 26–46 (AIVSLLTALFISLWMGPRMIA). Residues 47-71 (RLQKLSFGQVVRNDGPESHFSKRGT) are Cytoplasmic-facing. Residues 72–92 (PTMGGIMILTSIVISVLLWAY) form a helical membrane-spanning segment. A topological domain (periplasmic) is located at residue proline 93. Residues 94-114 (SNPYVWCVLVVLIGYGIIGFV) traverse the membrane as a helical segment. Topologically, residues 115–131 (DDYRKVVRKDTKGLIAR) are cytoplasmic. Residues 132 to 152 (WKYFWMSVIALGVAFALYLVG) traverse the membrane as a helical segment. Topologically, residues 153–167 (KDTPATQLVVPFFKD) are periplasmic. Residues 168–188 (VMPQLGLFYILLSYFVIVGTG) form a helical membrane-spanning segment. Topologically, residues 189–198 (NAVNLTDGLD) are cytoplasmic. Residues 199–219 (GLAIMPTVFVAAGFALVAWAT) traverse the membrane as a helical segment. At 220 to 235 (GNMNFANYLHIPYLRH) the chain is on the periplasmic side. The chain crosses the membrane as a helical span at residues 236-256 (AGELVIVCTAIVGAGLGFLWF). The Cytoplasmic segment spans residues 257–262 (NTYPAQ). The helical transmembrane segment at 263–283 (VFMGDVGSLALGGALGIIAVL) threads the bilayer. The Periplasmic portion of the chain corresponds to 284-287 (LRQE). Residues 288–308 (FLLVIMGGVFVVETLSVILQV) form a helical membrane-spanning segment. Residues 309-337 (GSFKLRGQRIFRMAPIHHHYELKGWPEPR) are Cytoplasmic-facing. A helical membrane pass occupies residues 338–358 (VIVRFWIISLMLVLIGLATLK). Residues 359 to 360 (VR) lie on the Periplasmic side of the membrane.

The protein belongs to the glycosyltransferase 4 family. MraY subfamily. Requires Mg(2+) as cofactor.

It localises to the cell inner membrane. The catalysed reaction is UDP-N-acetyl-alpha-D-muramoyl-L-alanyl-gamma-D-glutamyl-meso-2,6-diaminopimeloyl-D-alanyl-D-alanine + di-trans,octa-cis-undecaprenyl phosphate = di-trans,octa-cis-undecaprenyl diphospho-N-acetyl-alpha-D-muramoyl-L-alanyl-D-glutamyl-meso-2,6-diaminopimeloyl-D-alanyl-D-alanine + UMP. It participates in cell wall biogenesis; peptidoglycan biosynthesis. In terms of biological role, catalyzes the initial step of the lipid cycle reactions in the biosynthesis of the cell wall peptidoglycan: transfers peptidoglycan precursor phospho-MurNAc-pentapeptide from UDP-MurNAc-pentapeptide onto the lipid carrier undecaprenyl phosphate, yielding undecaprenyl-pyrophosphoryl-MurNAc-pentapeptide, known as lipid I. In Salmonella gallinarum (strain 287/91 / NCTC 13346), this protein is Phospho-N-acetylmuramoyl-pentapeptide-transferase.